The following is a 127-amino-acid chain: uncharacterized protein (127 aa).

Residues 91 to 113 (IYLIVSIAVSILAIIAFFIFLML) traverse the membrane as a helical segment.

It is found in the membrane. This is an uncharacterized protein from Bacillus subtilis (strain 168).